The primary structure comprises 789 residues: E3 UFM1-protein ligase 1 (789 aa).

Residues 2–212 (AADWEEIRRL…VSNLITRYGF (211 aa)) are required for E3 UFM1-protein ligase activity. 2 disordered regions span residues 407 to 470 (LENS…TGRN) and 743 to 763 (SKKA…ADTI). Basic residues predominate over residues 444–453 (KIKKTKKKGR). Positions 748–760 (QEDDNKTEEEEGA) are enriched in acidic residues.

Belongs to the UFL1 family. As to quaternary structure, catalytic component of the UFM1 ribosome E3 ligase (UREL) complex. Interacts with E2-like enzyme UFC1.

It localises to the endoplasmic reticulum membrane. Its subcellular location is the cytoplasm. It is found in the cytosol. The protein resides in the nucleus. The protein localises to the chromosome. Its function is as follows. E3 protein ligase that mediates ufmylation, the covalent attachment of the ubiquitin-like modifier UFM1 to lysine residues on target proteins, and which plays a key role in various processes, such as ribosome recycling, response to DNA damage, interferon response or reticulophagy (also called ER-phagy). As part of the UREL complex, plays a key role in ribosome recycling by catalyzing mono-ufmylation of RPL26/uL24 subunit of the 60S ribosome. Ufmylation of RPL26/uL24 occurs on free 60S ribosomes following ribosome dissociation: it weakens the junction between post-termination 60S subunits and SEC61 translocons, promoting release and recycling of the large ribosomal subunit from the endoplasmic reticulum membrane. Ufmylation of RPL26/uL24 and subsequent 60S ribosome recycling either take place after normal termination of translation or after ribosome stalling during cotranslational translocation at the endoplasmic reticulum. Involved in reticulophagy in response to endoplasmic reticulum stress by mediating ufmylation of proteins such as CYB5R3 and RPN1, thereby promoting lysosomal degradation of ufmylated proteins. Ufmylation in response to endoplasmic reticulum stress is essential for processes such as hematopoiesis, blood vessel morphogenesis or inflammatory response. In Gallus gallus (Chicken), this protein is E3 UFM1-protein ligase 1.